The chain runs to 358 residues: 3-dehydroquinate synthase (358 aa).

NAD(+) contacts are provided by residues 70-75 (DGEKFK), 104-108 (GVVGD), 128-129 (TT), Lys-141, Lys-150, and 168-171 (CLQT). Residues Glu-183, His-246, and His-263 each coordinate Zn(2+).

This sequence belongs to the sugar phosphate cyclases superfamily. Dehydroquinate synthase family. Co(2+) serves as cofactor. The cofactor is Zn(2+). NAD(+) is required as a cofactor.

The protein localises to the cytoplasm. The catalysed reaction is 7-phospho-2-dehydro-3-deoxy-D-arabino-heptonate = 3-dehydroquinate + phosphate. The protein operates within metabolic intermediate biosynthesis; chorismate biosynthesis; chorismate from D-erythrose 4-phosphate and phosphoenolpyruvate: step 2/7. Catalyzes the conversion of 3-deoxy-D-arabino-heptulosonate 7-phosphate (DAHP) to dehydroquinate (DHQ). This is 3-dehydroquinate synthase from Shewanella frigidimarina (strain NCIMB 400).